Consider the following 201-residue polypeptide: dCTP deaminase, dUMP-forming (201 aa).

DCTP contacts are provided by residues 101–106 (KSSLGR), D119, 127–129 (TLE), Q148, Y162, and Q174. The Proton donor/acceptor role is filled by E129.

It belongs to the dCTP deaminase family. As to quaternary structure, homotrimer.

It catalyses the reaction dCTP + 2 H2O = dUMP + NH4(+) + diphosphate. The protein operates within pyrimidine metabolism; dUMP biosynthesis; dUMP from dCTP: step 1/1. Bifunctional enzyme that catalyzes both the deamination of dCTP to dUTP and the hydrolysis of dUTP to dUMP without releasing the toxic dUTP intermediate. The protein is dCTP deaminase, dUMP-forming of Parafrankia sp. (strain EAN1pec).